Consider the following 417-residue polypeptide: Imidazolonepropionase (417 aa).

His-80 and His-82 together coordinate Fe(3+). Residues His-80 and His-82 each contribute to the Zn(2+) site. Residues Arg-89, Tyr-152, and His-187 each coordinate 4-imidazolone-5-propanoate. Tyr-152 serves as a coordination point for N-formimidoyl-L-glutamate. Position 252 (His-252) interacts with Fe(3+). His-252 provides a ligand contact to Zn(2+). Glu-255 contacts 4-imidazolone-5-propanoate. Asp-326 is a binding site for Fe(3+). Asp-326 provides a ligand contact to Zn(2+). 2 residues coordinate N-formimidoyl-L-glutamate: Asn-328 and Gly-330. Ser-331 is a 4-imidazolone-5-propanoate binding site.

It belongs to the metallo-dependent hydrolases superfamily. HutI family. It depends on Zn(2+) as a cofactor. Fe(3+) is required as a cofactor.

It localises to the cytoplasm. The catalysed reaction is 4-imidazolone-5-propanoate + H2O = N-formimidoyl-L-glutamate. It functions in the pathway amino-acid degradation; L-histidine degradation into L-glutamate; N-formimidoyl-L-glutamate from L-histidine: step 3/3. In terms of biological role, catalyzes the hydrolytic cleavage of the carbon-nitrogen bond in imidazolone-5-propanoate to yield N-formimidoyl-L-glutamate. It is the third step in the universal histidine degradation pathway. In Bacteroides fragilis (strain YCH46), this protein is Imidazolonepropionase.